The sequence spans 231 residues: Sugar fermentation stimulation protein homolog (231 aa).

This sequence belongs to the SfsA family.

The protein is Sugar fermentation stimulation protein homolog of Pyrobaculum islandicum (strain DSM 4184 / JCM 9189 / GEO3).